Consider the following 184-residue polypeptide: MVNSSTSSDQLDVDLSFTPFPVQDLDVFVNSDTLELMKNPSKWIEEIGSWIRFIQVNSALKCPEIVLNSSQFSLGLELTNDKKILDLNHAWLGQSKATDVLSFPIIDETFFGVSNECIELGDIVISVPTAIRQAKDNNADLFRELRWLATHGLLHLLGWDHSDEESLHKMLLIQEQLLEIRGIL.

The Zn(2+) site is built by His-151, His-155, and His-161.

It belongs to the endoribonuclease YbeY family. The cofactor is Zn(2+).

The protein resides in the cytoplasm. In terms of biological role, single strand-specific metallo-endoribonuclease involved in late-stage 70S ribosome quality control and in maturation of the 3' terminus of the 16S rRNA. The sequence is that of Endoribonuclease YbeY from Prochlorococcus marinus (strain NATL2A).